Here is a 443-residue protein sequence, read N- to C-terminus: Ribosomal protein uS12 methylthiotransferase RimO (443 aa).

An MTTase N-terminal domain is found at 6 to 116; it reads PRVGMISLGC…VVNAVHDVVP (111 aa). [4Fe-4S] cluster-binding residues include cysteine 15, cysteine 51, cysteine 80, cysteine 149, cysteine 153, and cysteine 156. Residues 135 to 373 enclose the Radical SAM core domain; the sequence is LTPRHYAYLK…MAHQQAISAA (239 aa). Residues 376-443 form the TRAM domain; the sequence is QMKIGKEIEV…DEYDLWAEML (68 aa).

Belongs to the methylthiotransferase family. RimO subfamily. The cofactor is [4Fe-4S] cluster.

It is found in the cytoplasm. It carries out the reaction L-aspartate(89)-[ribosomal protein uS12]-hydrogen + (sulfur carrier)-SH + AH2 + 2 S-adenosyl-L-methionine = 3-methylsulfanyl-L-aspartate(89)-[ribosomal protein uS12]-hydrogen + (sulfur carrier)-H + 5'-deoxyadenosine + L-methionine + A + S-adenosyl-L-homocysteine + 2 H(+). Catalyzes the methylthiolation of an aspartic acid residue of ribosomal protein uS12. The protein is Ribosomal protein uS12 methylthiotransferase RimO of Pseudomonas syringae pv. tomato (strain ATCC BAA-871 / DC3000).